Reading from the N-terminus, the 119-residue chain is Large ribosomal subunit protein bL19 (119 aa).

Belongs to the bacterial ribosomal protein bL19 family.

Its function is as follows. This protein is located at the 30S-50S ribosomal subunit interface and may play a role in the structure and function of the aminoacyl-tRNA binding site. The sequence is that of Large ribosomal subunit protein bL19 from Saccharopolyspora erythraea (strain ATCC 11635 / DSM 40517 / JCM 4748 / NBRC 13426 / NCIMB 8594 / NRRL 2338).